The chain runs to 449 residues: Ribosomal protein uS12 methylthiotransferase RimO (449 aa).

Residues 16-126 enclose the MTTase N-terminal domain; it reads PKISFVSLGC…VMEAVHAAIA (111 aa). [4Fe-4S] cluster is bound by residues cysteine 25, cysteine 61, cysteine 90, cysteine 157, cysteine 161, and cysteine 164. The Radical SAM core domain occupies 143–381; it reads LTPRHYAYLK…MEHQQKISAR (239 aa). Residues 384–449 enclose the TRAM domain; it reads REKIGKHVSV…DAYDLHGKAV (66 aa).

It belongs to the methylthiotransferase family. RimO subfamily. The cofactor is [4Fe-4S] cluster.

The protein localises to the cytoplasm. The enzyme catalyses L-aspartate(89)-[ribosomal protein uS12]-hydrogen + (sulfur carrier)-SH + AH2 + 2 S-adenosyl-L-methionine = 3-methylsulfanyl-L-aspartate(89)-[ribosomal protein uS12]-hydrogen + (sulfur carrier)-H + 5'-deoxyadenosine + L-methionine + A + S-adenosyl-L-homocysteine + 2 H(+). In terms of biological role, catalyzes the methylthiolation of an aspartic acid residue of ribosomal protein uS12. The sequence is that of Ribosomal protein uS12 methylthiotransferase RimO from Beijerinckia indica subsp. indica (strain ATCC 9039 / DSM 1715 / NCIMB 8712).